Here is a 246-residue protein sequence, read N- to C-terminus: MLNDKTAIVTGASRGIGRSIALDLAKSGANVVVNYSGNEAKANEVVDEIKSMGRKAIAVKADVSNPEDVQNMIKETLSVFSTIDILVNNAGITRDNLIMRMKEDEWDDVININLKGVFNCTKAVTRQMMKQRSGRIINVSSIVGVSGNPGQANYVAAKAGVIGLTKSSAKELASRNITVNAIAPGFISTDMTDKLAKDVQDEMLKQIPLARFGEPSDVSSVVTFLASEGARYMTGQTLHIDGGMVM.

NADP(+)-binding positions include 11–14, Ser-36, 62–63, and Asn-89; these read GASR and DV. Ser-141 serves as a coordination point for substrate. Tyr-154 serves as the catalytic Proton acceptor. Residues 154–158 and Ile-187 contribute to the NADP(+) site; that span reads YVAAK.

This sequence belongs to the short-chain dehydrogenases/reductases (SDR) family. Homotetramer.

The catalysed reaction is a (3R)-hydroxyacyl-[ACP] + NADP(+) = a 3-oxoacyl-[ACP] + NADPH + H(+). The protein operates within lipid metabolism; fatty acid biosynthesis. Catalyzes the NADPH-dependent reduction of beta-ketoacyl-ACP substrates to beta-hydroxyacyl-ACP products, the first reductive step in the elongation cycle of fatty acid biosynthesis. The chain is 3-oxoacyl-[acyl-carrier-protein] reductase FabG (fabG) from Bacillus subtilis (strain 168).